The sequence spans 329 residues: uncharacterized protein (329 aa).

The SIS domain maps to Ile38–Phe184. ATP is bound at residue Gly56–Ala61. 2 consecutive CBS domains span residues Gln211–Leu267 and Glu270–Ala329.

Belongs to the SIS family. GutQ/KpsF subfamily.

This is an uncharacterized protein from Helicobacter pylori (strain ATCC 700392 / 26695) (Campylobacter pylori).